The chain runs to 345 residues: MKKYLVMEDGTVLSGQGYGSYKEAYGELVFTTSMTGYLETLTDPSYVGQMLVFASPTIANYALEMGKMESNGVKVSALITKDAHIELKKGGYGREFDEFLKEQGIPGIDGIDTRMLVRKIRANGVLRSYVVNDPSHSLDFPDPMNDDLVSKAVPHHDPVFVKGEEGGTVLFIDLGSKNTLKELMLQNFSLIVVDKQTNLDEIEGYDAIFVSNGPGDPSHPSLSNVIKFLSHNIGVKPLFGICFGLQAISLAYGAKTYKMKFGHRGSNHAVTDGTHSYVTTHNHGYAVDGSTVKDFKVIGWDANDGTVEIIEGDDMFAVQFHPEASPGPHDTRWFFGEMKRRIGYA.

Positions 1–169 (MKKYLVMEDG…FVKGEEGGTV (169 aa)) are CPSase. Positions 45, 213, and 215 each coordinate L-glutamine. The Glutamine amidotransferase type-1 domain maps to 168–345 (TVLFIDLGSK…GEMKRRIGYA (178 aa)). The Nucleophile role is filled by Cys242. L-glutamine is bound by residues Phe243, Gln246, Asn282, Gly284, and Tyr285. Active-site residues include His321 and Glu323.

The protein belongs to the CarA family. In terms of assembly, composed of two chains; the small (or glutamine) chain promotes the hydrolysis of glutamine to ammonia, which is used by the large (or ammonia) chain to synthesize carbamoyl phosphate. Tetramer of heterodimers (alpha,beta)4.

The enzyme catalyses hydrogencarbonate + L-glutamine + 2 ATP + H2O = carbamoyl phosphate + L-glutamate + 2 ADP + phosphate + 2 H(+). It carries out the reaction L-glutamine + H2O = L-glutamate + NH4(+). It participates in amino-acid biosynthesis; L-arginine biosynthesis; carbamoyl phosphate from bicarbonate: step 1/1. It functions in the pathway pyrimidine metabolism; UMP biosynthesis via de novo pathway; (S)-dihydroorotate from bicarbonate: step 1/3. Functionally, small subunit of the glutamine-dependent carbamoyl phosphate synthetase (CPSase). CPSase catalyzes the formation of carbamoyl phosphate from the ammonia moiety of glutamine, carbonate, and phosphate donated by ATP, constituting the first step of 2 biosynthetic pathways, one leading to arginine and/or urea and the other to pyrimidine nucleotides. The small subunit (glutamine amidotransferase) binds and cleaves glutamine to supply the large subunit with the substrate ammonia. The protein is Carbamoyl phosphate synthase small chain of Thermoplasma volcanium (strain ATCC 51530 / DSM 4299 / JCM 9571 / NBRC 15438 / GSS1).